The primary structure comprises 147 residues: MVAVGKTSAIAAGVCGALLLGYCIYFDRKRRSDPNFKNRLREKRRKQKIAKERAGQSRLPDLKDAEAVQKFFLEEIQLGEELLAQGDFEKGVDHLTNAIAICGQPQQLLQVLQQTLPPPVFQMLLTKLPTISQRIGNAQNLSEDDVE.

Topologically, residues 1–3 are mitochondrial intermembrane; the sequence is MVA. A helical transmembrane segment spans residues 4-26; that stretch reads VGKTSAIAAGVCGALLLGYCIYF. The Cytoplasmic portion of the chain corresponds to 27–147; sequence DRKRRSDPNF…AQNLSEDDVE (121 aa).

This sequence belongs to the Tom20 family. As to quaternary structure, forms part of the preprotein translocase complex of the outer mitochondrial membrane (TOM complex). Interacts with tom22.

The protein localises to the mitochondrion outer membrane. Its function is as follows. Central component of the receptor complex responsible for the recognition and translocation of cytosolically synthesized mitochondrial preproteins. Together with tom22 functions as the transit peptide receptor at the surface of the mitochondrion outer membrane and facilitates the movement of preproteins into the tom40 translocation pore. The sequence is that of Mitochondrial import receptor subunit TOM20 homolog (tomm20) from Xenopus laevis (African clawed frog).